The following is a 496-amino-acid chain: Membrane-bound lytic murein transglycosylase F (496 aa).

An N-terminal signal peptide occupies residues 1 to 29 (MFFRPDFRPRCAKWLIATGLFLMLGACVE). Positions 30-267 (KPTTLERVKE…RLKDRYYGHV (238 aa)) are non-LT domain. Positions 268–496 (DVLGYVGAYT…SGSSPDKPAL (229 aa)) are LT domain. Glutamate 314 is an active-site residue. Residues 464–496 (VADGNLHVPGVDKTQPPAPPAPASGSSPDKPAL) are disordered. The span at 486 to 496 (ASGSSPDKPAL) shows a compositional bias: low complexity.

It in the N-terminal section; belongs to the bacterial solute-binding protein 3 family. This sequence in the C-terminal section; belongs to the transglycosylase Slt family.

The protein resides in the cell outer membrane. The catalysed reaction is Exolytic cleavage of the (1-&gt;4)-beta-glycosidic linkage between N-acetylmuramic acid (MurNAc) and N-acetylglucosamine (GlcNAc) residues in peptidoglycan, from either the reducing or the non-reducing ends of the peptidoglycan chains, with concomitant formation of a 1,6-anhydrobond in the MurNAc residue.. Its function is as follows. Murein-degrading enzyme that degrades murein glycan strands and insoluble, high-molecular weight murein sacculi, with the concomitant formation of a 1,6-anhydromuramoyl product. Lytic transglycosylases (LTs) play an integral role in the metabolism of the peptidoglycan (PG) sacculus. Their lytic action creates space within the PG sacculus to allow for its expansion as well as for the insertion of various structures such as secretion systems and flagella. The chain is Membrane-bound lytic murein transglycosylase F from Pseudomonas savastanoi pv. phaseolicola (strain 1448A / Race 6) (Pseudomonas syringae pv. phaseolicola (strain 1448A / Race 6)).